A 475-amino-acid polypeptide reads, in one-letter code: Trigger factor (475 aa).

Positions 165 to 250 (GDRVTIDYLG…VKAVFRPDEL (86 aa)) constitute a PPIase FKBP-type domain. Positions 439-466 (EYDETDVPEEKPAKKKSAVKEKSAEKTS) are enriched in basic and acidic residues. The interval 439 to 475 (EYDETDVPEEKPAKKKSAVKEKSAEKTSAKKKAPKKA) is disordered.

It belongs to the FKBP-type PPIase family. Tig subfamily.

It is found in the cytoplasm. It catalyses the reaction [protein]-peptidylproline (omega=180) = [protein]-peptidylproline (omega=0). Its function is as follows. Involved in protein export. Acts as a chaperone by maintaining the newly synthesized protein in an open conformation. Functions as a peptidyl-prolyl cis-trans isomerase. In Bartonella tribocorum (strain CIP 105476 / IBS 506), this protein is Trigger factor.